A 472-amino-acid polypeptide reads, in one-letter code: 3-isopropylmalate dehydratase large subunit (472 aa).

Residues cysteine 347, cysteine 407, and cysteine 410 each coordinate [4Fe-4S] cluster.

It belongs to the aconitase/IPM isomerase family. LeuC type 1 subfamily. As to quaternary structure, heterodimer of LeuC and LeuD. It depends on [4Fe-4S] cluster as a cofactor.

The catalysed reaction is (2R,3S)-3-isopropylmalate = (2S)-2-isopropylmalate. The protein operates within amino-acid biosynthesis; L-leucine biosynthesis; L-leucine from 3-methyl-2-oxobutanoate: step 2/4. Its function is as follows. Catalyzes the isomerization between 2-isopropylmalate and 3-isopropylmalate, via the formation of 2-isopropylmaleate. In Parasynechococcus marenigrum (strain WH8102), this protein is 3-isopropylmalate dehydratase large subunit.